The following is a 290-amino-acid chain: Serpentine receptor class U-26 (290 aa).

The next 7 membrane-spanning stretches (helical) occupy residues 31–51, 70–90, 112–134, 158–178, 185–205, 213–233, and 262–282; these read LPML…IIIL, LLSA…ADFL, FITI…PFLV, FSIP…FPAI, AYPF…FGLV, NTLF…LLLI, and MIFS…LHIV.

Belongs to the nematode receptor-like protein sru family.

It localises to the membrane. The polypeptide is Serpentine receptor class U-26 (sru-26) (Caenorhabditis elegans).